A 105-amino-acid chain; its full sequence is Large ribosomal subunit protein uL24 (105 aa).

The protein belongs to the universal ribosomal protein uL24 family. In terms of assembly, part of the 50S ribosomal subunit.

Its function is as follows. One of two assembly initiator proteins, it binds directly to the 5'-end of the 23S rRNA, where it nucleates assembly of the 50S subunit. In terms of biological role, one of the proteins that surrounds the polypeptide exit tunnel on the outside of the subunit. This Dictyoglomus thermophilum (strain ATCC 35947 / DSM 3960 / H-6-12) protein is Large ribosomal subunit protein uL24.